The primary structure comprises 181 residues: Translation initiation factor IF-3 (181 aa).

The protein belongs to the IF-3 family. As to quaternary structure, monomer.

Its subcellular location is the cytoplasm. IF-3 binds to the 30S ribosomal subunit and shifts the equilibrium between 70S ribosomes and their 50S and 30S subunits in favor of the free subunits, thus enhancing the availability of 30S subunits on which protein synthesis initiation begins. The polypeptide is Translation initiation factor IF-3 (Pseudoalteromonas translucida (strain TAC 125)).